Consider the following 446-residue polypeptide: Na(+)-translocating NADH-quinone reductase subunit A (446 aa).

The protein belongs to the NqrA family. In terms of assembly, composed of six subunits; NqrA, NqrB, NqrC, NqrD, NqrE and NqrF.

It catalyses the reaction a ubiquinone + n Na(+)(in) + NADH + H(+) = a ubiquinol + n Na(+)(out) + NAD(+). Its function is as follows. NQR complex catalyzes the reduction of ubiquinone-1 to ubiquinol by two successive reactions, coupled with the transport of Na(+) ions from the cytoplasm to the periplasm. NqrA to NqrE are probably involved in the second step, the conversion of ubisemiquinone to ubiquinol. In Vibrio anguillarum (Listonella anguillarum), this protein is Na(+)-translocating NADH-quinone reductase subunit A.